Here is a 332-residue protein sequence, read N- to C-terminus: MATGSRESSFSSCASSCDFDDEGVRGTCEDASLCKRFAVSIGHWHDPYIEHLVRQSKERKAPEINRGYFARVHGVSQLIKAFLRKTECRCQILNLGAGMDTTFWKLKDEGLLPNKYFEVDFPMIVTRKLHTIKNKPLLFRPIMELHPEDTLQIDSHMLDSKRYAIIGADLRDLSELEEKLKKCNMNTQLPTLLITECVLVYMTPEQSANLLKWAARSFETAMFINYEQVNMDDRFGQIMIENLRRRQCDLAGVETCKSLESQKERLLLNGWETASAVNMMELYSGLPRAEVNRIESLEFLDEMELLEQLMRHYCLCWATRGGQELGLKEITY.

S-adenosyl-L-methionine-binding positions include Arg-71, Gly-96, Asp-120, 169–170, and Glu-196; that span reads DL.

This sequence belongs to the methyltransferase superfamily. LCMT family.

It catalyses the reaction [phosphatase 2A protein]-C-terminal L-leucine + S-adenosyl-L-methionine = [phosphatase 2A protein]-C-terminal L-leucine methyl ester + S-adenosyl-L-homocysteine. Functionally, methylates the carboxyl group of the C-terminal leucine residue of protein phosphatase 2A catalytic subunits to form alpha-leucine ester residues. The chain is Leucine carboxyl methyltransferase 1 (Lcmt1) from Rattus norvegicus (Rat).